A 197-amino-acid chain; its full sequence is Na(+)-translocating NADH-quinone reductase subunit E (197 aa).

Transmembrane regions (helical) follow at residues 11–31, 35–55, 76–96, 108–128, 139–159, and 175–195; these read SVFI…FLAV, VSTA…SVPV, FLKF…LEMF, LGIY…VSFM, VVYG…LAGI, and LGIT…FSGI.

This sequence belongs to the NqrDE/RnfAE family. In terms of assembly, composed of six subunits; NqrA, NqrB, NqrC, NqrD, NqrE and NqrF.

The protein resides in the cell inner membrane. It catalyses the reaction a ubiquinone + n Na(+)(in) + NADH + H(+) = a ubiquinol + n Na(+)(out) + NAD(+). Functionally, NQR complex catalyzes the reduction of ubiquinone-1 to ubiquinol by two successive reactions, coupled with the transport of Na(+) ions from the cytoplasm to the periplasm. NqrA to NqrE are probably involved in the second step, the conversion of ubisemiquinone to ubiquinol. The polypeptide is Na(+)-translocating NADH-quinone reductase subunit E (Neisseria meningitidis serogroup C (strain 053442)).